Reading from the N-terminus, the 667-residue chain is UvrABC system protein C (667 aa).

A GIY-YIG domain is found at Ala-43–Val-122. The region spanning Gln-232–Leu-267 is the UVR domain.

Belongs to the UvrC family. In terms of assembly, interacts with UvrB in an incision complex.

It localises to the cytoplasm. The UvrABC repair system catalyzes the recognition and processing of DNA lesions. UvrC both incises the 5' and 3' sides of the lesion. The N-terminal half is responsible for the 3' incision and the C-terminal half is responsible for the 5' incision. The chain is UvrABC system protein C from Prochlorococcus marinus (strain MIT 9313).